Consider the following 412-residue polypeptide: Putative phosphate permease PF1020 (412 aa).

The next 10 helical transmembrane spans lie at 7–27 (MLAD…AWAI), 50–70 (AVII…KTVT), 88–108 (VLIF…VIAT), 119–139 (SIIG…IVNW), 143–163 (IKVV…AYLV), 187–207 (FWIG…VLHG), 213–233 (GFLK…SLIL), 298–318 (WILA…GYKV), 335–355 (FTID…GMPI), and 384–404 (DIII…GIIF).

Belongs to the inorganic phosphate transporter (PiT) (TC 2.A.20) family.

It is found in the cell membrane. Its function is as follows. Potential transporter for phosphate. This Pyrococcus furiosus (strain ATCC 43587 / DSM 3638 / JCM 8422 / Vc1) protein is Putative phosphate permease PF1020.